Reading from the N-terminus, the 334-residue chain is Putative 2-hydroxyacid dehydrogenase UNK4.10 (334 aa).

Residues 166–167 (GI), 244–246 (TAR), and Asp-270 contribute to the NAD(+) site. Arg-246 is a catalytic residue. Glu-275 is an active-site residue. The Proton donor role is filled by His-293. 293–296 (HLGT) is a binding site for NAD(+).

It belongs to the D-isomer specific 2-hydroxyacid dehydrogenase family.

This is Putative 2-hydroxyacid dehydrogenase UNK4.10 from Schizosaccharomyces pombe (strain 972 / ATCC 24843) (Fission yeast).